The chain runs to 557 residues: Urocanate hydratase (557 aa).

Residues 53–54, Gln-131, 177–179, Glu-197, Arg-202, 243–244, 264–268, 274–275, and Tyr-323 contribute to the NAD(+) site; these read GG, GMG, NA, QTSAH, and YL. The active site involves Cys-411. NAD(+) is bound at residue Gly-493.

The protein belongs to the urocanase family. Requires NAD(+) as cofactor.

The protein resides in the cytoplasm. It catalyses the reaction 4-imidazolone-5-propanoate = trans-urocanate + H2O. Its pathway is amino-acid degradation; L-histidine degradation into L-glutamate; N-formimidoyl-L-glutamate from L-histidine: step 2/3. Functionally, catalyzes the conversion of urocanate to 4-imidazolone-5-propionate. This chain is Urocanate hydratase, found in Pseudomonas putida (strain GB-1).